Reading from the N-terminus, the 108-residue chain is Replication initiation control protein YabA (108 aa).

4 residues coordinate Zn(2+): His82, Cys84, Cys98, and Cys101.

This sequence belongs to the YabA family. In terms of assembly, homotetramer. Interacts with both DnaA and DnaN, acting as a bridge between these two proteins. It depends on Zn(2+) as a cofactor.

Its subcellular location is the cytoplasm. The protein localises to the nucleoid. In terms of biological role, involved in control of chromosome replication initiation. Inhibits the cooperative binding of DnaA to the oriC region, thus negatively regulating initiation of chromosome replication. Inhibits the ability of DnaA-ATP to form a helix on DNA; does not disassemble preformed DnaA-DNA helices. Decreases the residence time of DnaA on the chromosome at its binding sites (oriC, replication forks and promoter-binding sites). Tethers DnaA to the replication machinery via the DNA polymerase beta sliding clamp subunit (dnaN). Associates with oriC and other DnaA targets on the chromosome in a DnaA-dependent manner. This is Replication initiation control protein YabA from Streptococcus agalactiae serotype Ia (strain ATCC 27591 / A909 / CDC SS700).